Consider the following 159-residue polypeptide: uncharacterized protein (159 aa).

This is an uncharacterized protein from Caenorhabditis elegans.